The following is a 415-amino-acid chain: Prostacyclin receptor (415 aa).

A disordered region spans residues 1 to 21; sequence MMASDGHPGPPSVTPGSPLSA. Topologically, residues 1–44 are extracellular; it reads MMASDGHPGPPSVTPGSPLSAGGREWQGMAGSCWNITYVQDSVG. Intrachain disulfides connect Cys33-Cys193 and Cys120-Cys198. A glycan (N-linked (GlcNAc...) asparagine) is linked at Asn35. The helical transmembrane segment at 45-66 threads the bilayer; that stretch reads PATSTLMFVAGVVGNGLALGIL. Residues 67 to 79 lie on the Cytoplasmic side of the membrane; the sequence is GARRRSHPSAFAV. The helical transmembrane segment at 80 to 104 threads the bilayer; that stretch reads LVTGLAVTDLLGTCFLSPAVFVAYA. At 105 to 122 the chain is on the extracellular side; it reads RNSSLLGLAHGGTMLCDT. The helical transmembrane segment at 123–143 threads the bilayer; the sequence is FAFAMTFFGLASTLILFAMAV. Topologically, residues 144–162 are cytoplasmic; it reads ERCLALSHPYLYAQLDGPR. The chain crosses the membrane as a helical span at residues 163–186; it reads CARFALPSIYAFCCLFCSLPLLGL. At 187 to 215 the chain is on the extracellular side; sequence GEHQQYCPGSWCFIRMRSAQPGGCAFSLA. Residues 216-236 form a helical membrane-spanning segment; the sequence is YASLMALLVTSIFFCNGSVTL. Topologically, residues 237–263 are cytoplasmic; it reads SLYHMYRQQRRHHGSFVPTSRAREDEV. A helical membrane pass occupies residues 264-288; that stretch reads YHLILLALMTVIMAVCSLPLMIRGF. Residues 289–301 are Extracellular-facing; sequence TQAIAPDSREMGD. The chain crosses the membrane as a helical span at residues 302 to 322; the sequence is LLAFRFNAFNPILDPWVFILF. Residues 323–415 lie on the Cytoplasmic side of the membrane; it reads RKAVFQRLKF…SEAIAACSLC (93 aa). The tract at residues 349-370 is disordered; the sequence is PLSRPASGRRDPPAPTSLQAKE. Position 365 is a phosphoserine (Ser365). Cys412 carries the cysteine methyl ester modification. Cys412 is lipidated: S-farnesyl cysteine. A propeptide spans 413 to 415 (removed in mature form); it reads SLC.

The protein belongs to the G-protein coupled receptor 1 family. Interacts (non-isoprenylated C-terminus) with PDZK1. In terms of processing, isoprenylation does not influence ligand binding but is required for efficient coupling to the effectors adenylyl cyclase and phospholipase C.

It localises to the cell membrane. Its function is as follows. Receptor for prostacyclin (prostaglandin I2 or PGI2). The activity of this receptor is mediated by G(s) proteins which activate adenylate cyclase. This Mus musculus (Mouse) protein is Prostacyclin receptor (Ptgir).